Here is a 372-residue protein sequence, read N- to C-terminus: tRNA-specific 2-thiouridylase MnmA (372 aa).

ATP is bound by residues 16–23 (GMSGGVDS) and M42. The tract at residues 102–104 (NPD) is interaction with target base in tRNA. Catalysis depends on C107, which acts as the Nucleophile. C107 and C205 are oxidised to a cystine. Position 132 (G132) interacts with ATP. Residues 155–157 (KDQ) form an interaction with tRNA region. The active-site Cysteine persulfide intermediate is the C205. Positions 317 to 318 (RY) are interaction with tRNA.

This sequence belongs to the MnmA/TRMU family.

The protein localises to the cytoplasm. The catalysed reaction is S-sulfanyl-L-cysteinyl-[protein] + uridine(34) in tRNA + AH2 + ATP = 2-thiouridine(34) in tRNA + L-cysteinyl-[protein] + A + AMP + diphosphate + H(+). Catalyzes the 2-thiolation of uridine at the wobble position (U34) of tRNA, leading to the formation of s(2)U34. This chain is tRNA-specific 2-thiouridylase MnmA, found in Shewanella denitrificans (strain OS217 / ATCC BAA-1090 / DSM 15013).